The chain runs to 121 residues: Large ribosomal subunit protein eL18 (121 aa).

The protein belongs to the eukaryotic ribosomal protein eL18 family.

The protein is Large ribosomal subunit protein eL18 of Methanoregula boonei (strain DSM 21154 / JCM 14090 / 6A8).